A 101-amino-acid polypeptide reads, in one-letter code: Urease subunit beta (101 aa).

It belongs to the urease beta subunit family. As to quaternary structure, heterotrimer of UreA (gamma), UreB (beta) and UreC (alpha) subunits. Three heterotrimers associate to form the active enzyme.

Its subcellular location is the cytoplasm. It catalyses the reaction urea + 2 H2O + H(+) = hydrogencarbonate + 2 NH4(+). Its pathway is nitrogen metabolism; urea degradation; CO(2) and NH(3) from urea (urease route): step 1/1. This Pseudomonas fluorescens (strain ATCC BAA-477 / NRRL B-23932 / Pf-5) protein is Urease subunit beta.